Reading from the N-terminus, the 460-residue chain is Muscarinic acetylcholine receptor M1 (460 aa).

Over 1 to 22 the chain is Extracellular; sequence MNTSVPPAVSPNITVLAPGKGP. Residues Asn2 and Asn12 are each glycosylated (N-linked (GlcNAc...) asparagine). Residues 23–48 form a helical membrane-spanning segment; the sequence is WQVAFIGITTGLLSLATVTGNLLVLI. Over 49–62 the chain is Cytoplasmic; it reads SFKVNTELKTVNNY. Residues 63-84 form a helical membrane-spanning segment; the sequence is FLLSLACADLIIGTFSMNLYTT. Topologically, residues 85–95 are extracellular; that stretch reads YLLMGHWALGT. Residues 96–121 form a helical membrane-spanning segment; that stretch reads LACDLWLALDYVASNASVMNLLLISF. The cysteines at positions 98 and 178 are disulfide-linked. The Cytoplasmic portion of the chain corresponds to 122–142; that stretch reads DRYFSVTRPLSYRAKRTPRRA. The helical transmembrane segment at 143-164 threads the bilayer; it reads ALMIGLAWLVSFVLWAPAILFW. Over 165 to 185 the chain is Extracellular; that stretch reads QYLVGERTVLAGQCYIQFLSQ. A helical transmembrane segment spans residues 186–209; sequence PIITFGTAMAAFYLPVTVMCTLYW. Residues 210-366 are Cytoplasmic-facing; the sequence is RIYRETENRA…LVKEKKAART (157 aa). Disordered stretches follow at residues 225–257, 274–297, and 310–351; these read LQGS…SPPG, WKEE…EEPG, and EAQA…QLAK. At Thr230 the chain carries Phosphothreonine. The segment covering 238–257 has biased composition (low complexity); sequence SSSSERSQPGAEGSPESPPG. Ser254 bears the Phosphoserine mark. The span at 328–343 shows a compositional bias: basic residues; sequence RPTKKGRDRGGKGQKP. The helical transmembrane segment at 367–390 threads the bilayer; sequence LSAILLAFILTWTPYNIMVLVSTF. Over 391–397 the chain is Extracellular; that stretch reads CKDCVPE. The chain crosses the membrane as a helical span at residues 398-420; it reads TLWELGYWLCYVNSTVNPMCYAL. Residues 421–460 are Cytoplasmic-facing; that stretch reads CNKAFRDTFRLLLLCRWDKRRWRKIPKRPGSVHRTPSRQC. Ser451 is modified (phosphoserine). A Phosphothreonine modification is found at Thr455. Ser457 carries the post-translational modification Phosphoserine.

Belongs to the G-protein coupled receptor 1 family. Muscarinic acetylcholine receptor subfamily. CHRM1 sub-subfamily. As to quaternary structure, interacts with GPRASP2. Interacts with TMEM147.

Its subcellular location is the cell membrane. It is found in the postsynaptic cell membrane. The muscarinic acetylcholine receptor mediates various cellular responses, including inhibition of adenylate cyclase, breakdown of phosphoinositides and modulation of potassium channels through the action of G proteins. Primary transducing effect is Pi turnover. The chain is Muscarinic acetylcholine receptor M1 (Chrm1) from Mus musculus (Mouse).